Reading from the N-terminus, the 902-residue chain is Protein translocase subunit SecA (902 aa).

ATP contacts are provided by residues Q89, 107 to 111, and D502; that span reads GEGKT. Zn(2+)-binding residues include C884, C886, C895, and H896.

Belongs to the SecA family. As to quaternary structure, monomer and homodimer. Part of the essential Sec protein translocation apparatus which comprises SecA, SecYEG and auxiliary proteins SecDF-YajC and YidC. Zn(2+) is required as a cofactor.

The protein localises to the cell inner membrane. It localises to the cytoplasm. It carries out the reaction ATP + H2O + cellular proteinSide 1 = ADP + phosphate + cellular proteinSide 2.. In terms of biological role, part of the Sec protein translocase complex. Interacts with the SecYEG preprotein conducting channel. Has a central role in coupling the hydrolysis of ATP to the transfer of proteins into and across the cell membrane, serving both as a receptor for the preprotein-SecB complex and as an ATP-driven molecular motor driving the stepwise translocation of polypeptide chains across the membrane. In Agrobacterium fabrum (strain C58 / ATCC 33970) (Agrobacterium tumefaciens (strain C58)), this protein is Protein translocase subunit SecA.